Reading from the N-terminus, the 631-residue chain is MNYETLASEIRDGVGGQENIISVIHCATRLRFKLRDNTNANADALKNNPGIIMVVESGGQFQVVVGNQVADVYQALLSLDGMARFSDSAAPEEEKKNSLFSGFIDIISSIFTPFVGVMAATGILKGFLALGVATHVISESSGTYKLLFAASDALFYFFPIVLGYTAGKKFGGNPFTTLVIGATLVHPSMIAAFNAMQAPDHSTLHFLGIPITFINYSSSVIPILFASWVSCKLEKPLNRWLHANIRNFFTPLLCIVISVPLTFLLIGPSATWLSQMLAGGYQWLYGLNSLLAGAVMGALWQVCVIFGLHWGFVPLMLNNFSVIGHDTLLPLLVPAVLGQAGATLGVLLRTQDLKRKGIAGSAFSAAIFGITEPAVYGVTLPLRRPFIFGCIGGALGAAVMGYAHTTMYSFGFPSIFSFTQVIPPTGVDSSVWAAVIGTLLAFAFAALTSWSFGVPKDETQPAAADSPAVLAETQANAGAVRDETLFSPLAGEVLLLEQVADRTFASGVMGKGIAIRPTQGRLYAPVDGTVASLFKTHHAIGLASRGGAEVLIHVGIDTVRLDGRYFTPHVRVGDVVRQGDLLLEFDGPAIEAAGYDLTTPIVITNSEDYRGVEPVASGKVDANAPLTQLVC.

Residues 1–86 (MNYETLASEI…LSLDGMARFS (86 aa)) enclose the PTS EIIB type-1 domain. C26 functions as the Phosphocysteine intermediate; for EIIB activity in the catalytic mechanism. Residues 105 to 466 (DIISSIFTPF…DETQPAAADS (362 aa)) enclose the PTS EIIC type-1 domain. Transmembrane regions (helical) follow at residues 120–140 (ATGI…ISES), 146–166 (LLFA…GYTA), 175–195 (FTTL…AFNA), 206–226 (FLGI…ILFA), 248–268 (FFTP…LIGP), 295–315 (VMGA…FVPL), 328–348 (LLPL…GVLL), 358–378 (IAGS…VYGV), 385–405 (PFIF…YAHT), and 434–454 (AVIG…SFGV). The PTS EIIA type-1 domain maps to 501–605 (DRTFASGVMG…DLTTPIVITN (105 aa)). H553 serves as the catalytic Tele-phosphohistidine intermediate; for EIIA activity.

The protein resides in the cell inner membrane. Its function is as follows. The phosphoenolpyruvate-dependent sugar phosphotransferase system (sugar PTS), a major carbohydrate active -transport system, catalyzes the phosphorylation of incoming sugar substrates concomitantly with their translocation across the cell membrane. This system is involved in beta-glucoside transport. In terms of biological role, acts both as a kinase and as a phosphatase on ArbG. This Dickeya chrysanthemi (Pectobacterium chrysanthemi) protein is PTS system beta-glucoside-specific EIIBCA component (arbF).